Here is a 241-residue protein sequence, read N- to C-terminus: NH(3)-dependent NAD(+) synthetase (241 aa).

27–34 is an ATP binding site; that stretch reads GISGGIDS. Residue aspartate 33 coordinates Mg(2+). Arginine 109 contacts deamido-NAD(+). Position 129 (threonine 129) interacts with ATP. Residue glutamate 134 coordinates Mg(2+). Deamido-NAD(+) is bound by residues lysine 142 and aspartate 149. Residues lysine 158 and threonine 180 each contribute to the ATP site. A deamido-NAD(+)-binding site is contributed by 231-232; it reads HK.

It belongs to the NAD synthetase family. In terms of assembly, homodimer.

The catalysed reaction is deamido-NAD(+) + NH4(+) + ATP = AMP + diphosphate + NAD(+) + H(+). It participates in cofactor biosynthesis; NAD(+) biosynthesis; NAD(+) from deamido-NAD(+) (ammonia route): step 1/1. Catalyzes the ATP-dependent amidation of deamido-NAD to form NAD. Uses ammonia as a nitrogen source. This chain is NH(3)-dependent NAD(+) synthetase, found in Thermoplasma acidophilum (strain ATCC 25905 / DSM 1728 / JCM 9062 / NBRC 15155 / AMRC-C165).